The sequence spans 147 residues: MPKIVKKEPKFVEQSGKKVTKSDEQWREQLSDEEFRVCREQGTEPPFSGKLLHNKETGVYACTCCNAPLFISDNKYDSGCGWPSFDAPLNNEAIRYLEDLSHGMVRTEIRCASCDSHLGHVFEDGPKTTGERYCVNSVSLIFNKSDE.

Over residues methionine 1–phenylalanine 11 the composition is skewed to basic and acidic residues. Residues methionine 1–glutamine 25 are disordered. Residues aspartate 23–serine 145 form the MsrB domain. Cysteine 62, cysteine 65, cysteine 111, and cysteine 114 together coordinate Zn(2+). Cysteine 134 functions as the Nucleophile in the catalytic mechanism.

The protein belongs to the MsrB Met sulfoxide reductase family. The cofactor is Zn(2+).

It carries out the reaction L-methionyl-[protein] + [thioredoxin]-disulfide + H2O = L-methionyl-(R)-S-oxide-[protein] + [thioredoxin]-dithiol. The polypeptide is Peptide methionine sulfoxide reductase MsrB (Vibrio parahaemolyticus serotype O3:K6 (strain RIMD 2210633)).